A 595-amino-acid polypeptide reads, in one-letter code: Inactive metallocarboxypeptidase ecm14 (595 aa).

The signal sequence occupies residues 1–22 (MYRPDHVFVILCAVFFTGQVTA). A propeptide spanning residues 23–178 (VPAGTGITHP…MIYESQYPSR (156 aa)) is cleaved from the precursor. The region spanning 206–527 (NYQPFPVILQ…NSVLVLGHFL (322 aa)) is the Peptidase M14 domain. 2 residues coordinate Zn(2+): His270 and Glu273. Residues 270–273 (HARE), Arg328, and 345–346 (DR) contribute to the substrate site. The cysteines at positions 339 and 362 are disulfide-linked. The N-linked (GlcNAc...) asparagine glycan is linked to Asn386. A Zn(2+)-binding site is contributed by His402. 403–404 (SY) contacts substrate.

Belongs to the peptidase M14 family. Requires Zn(2+) as cofactor.

Its subcellular location is the vacuole. It is found in the secreted. Inactive carboxypeptidase that may play a role in cell wall organization and biogenesis. This Talaromyces marneffei (strain ATCC 18224 / CBS 334.59 / QM 7333) (Penicillium marneffei) protein is Inactive metallocarboxypeptidase ecm14 (ecm14).